A 122-amino-acid polypeptide reads, in one-letter code: Large ribosomal subunit protein uL14 (122 aa).

This sequence belongs to the universal ribosomal protein uL14 family. As to quaternary structure, part of the 50S ribosomal subunit. Forms a cluster with proteins L3 and L19. In the 70S ribosome, L14 and L19 interact and together make contacts with the 16S rRNA in bridges B5 and B8.

Functionally, binds to 23S rRNA. Forms part of two intersubunit bridges in the 70S ribosome. This chain is Large ribosomal subunit protein uL14, found in Sulfurihydrogenibium sp. (strain YO3AOP1).